A 314-amino-acid polypeptide reads, in one-letter code: tRNA dimethylallyltransferase 2 (314 aa).

Glycine 8–serine 15 contacts ATP. Threonine 10 to serine 15 is a binding site for substrate.

Belongs to the IPP transferase family. As to quaternary structure, monomer. Requires Mg(2+) as cofactor.

The catalysed reaction is adenosine(37) in tRNA + dimethylallyl diphosphate = N(6)-dimethylallyladenosine(37) in tRNA + diphosphate. Functionally, catalyzes the transfer of a dimethylallyl group onto the adenine at position 37 in tRNAs that read codons beginning with uridine, leading to the formation of N6-(dimethylallyl)adenosine (i(6)A). This is tRNA dimethylallyltransferase 2 from Mycobacterium ulcerans (strain Agy99).